Consider the following 859-residue polypeptide: DNA (cytosine-5)-methyltransferase 3B (859 aa).

The interaction with DNMT1 and DNMT3A stretch occupies residues 1–305 (MKGDSRHLNE…LATFNKLVSY (305 aa)). Residues 25–226 (GNFSDQSSDT…RDGDSTEYQD (202 aa)) form a disordered region. Acidic residues predominate over residues 85–94 (DRDDEVDDGN). Position 96 is a phosphoserine (S96). Residue K102 forms a Glycyl lysine isopeptide (Lys-Gly) (interchain with G-Cter in SUMO2) linkage. Basic and acidic residues predominate over residues 103 to 114 (LTRETKDTRTRS). T112 carries the post-translational modification Phosphothreonine. The residue at position 116 (S116) is a Phosphoserine. The span at 167-179 (SSSASTPWSSPAS) shows a compositional bias: low complexity. Positions 189–198 (KSVSTPSVDL) are enriched in polar residues. The segment covering 214 to 226 (AESRDGDSTEYQD) has biased composition (basic and acidic residues). S216 carries the phosphoserine modification. Residues 232-290 (IGDLVWGKIKGFSWWPAMVVSWKATSKRQAMPGMRWVQWFGDGKFSEISADKLVALGLF) form the PWWP domain. The disordered stretch occupies residues 348 to 429 (KPTGIEGLKP…ESRERMASEV (82 aa)). 2 stretches are compositionally biased toward basic and acidic residues: residues 370-381 (RRSDSRNLEPRR) and 412-426 (GKDR…ERMA). R415 carries the citrulline modification. Positions 428 to 560 (EVTNNKGNLE…LQDFFTTDPD (133 aa)) constitute an ADD domain. The GATA-type; atypical zinc-finger motif lies at 439 to 469 (RCLSCGKKNPVSFHPLFEGGLCQSCRDRFLE). Positions 440-532 (CLSCGKKNPV…LQEPWSCYMC (93 aa)) are interaction with the PRC2/EED-EZH2 complex. The segment at 480 to 536 (QSYCTVCCEGRELLLCSNTSCCRCFCVECLEVLVGAGTAEDAKLQEPWSCYMCLPQR) adopts a PHD-type; atypical zinc-finger fold. An SAM-dependent MTase C5-type domain is found at 581–859 (IRVLSLFDGI…APLKDYFACE (279 aa)). Residues 588-592 (DGIAT) and E611 contribute to the S-adenosyl-L-methionine site. A Glycyl lysine isopeptide (Lys-Gly) (interchain with G-Cter in SUMO2) cross-link involves residue K623. S-adenosyl-L-methionine is bound at residue 633-635 (DVR). Residue C657 is part of the active site. 838–840 (RSW) contributes to the S-adenosyl-L-methionine binding site.

The protein belongs to the class I-like SAM-binding methyltransferase superfamily. C5-methyltransferase family. Interacts with CBX4, DNMT1, DNMT3A, SETDB1, UBE2I9, UBL1 and ZHX1. Interacts with SUV39H1 and BAZ2A/TIP5. Interacts with the PRC2/EED-EZH2 complex. Interacts with UHRF1. Post-translationally, sumoylated. In terms of processing, citrullinated by PADI4.

It is found in the nucleus. It catalyses the reaction a 2'-deoxycytidine in DNA + S-adenosyl-L-methionine = a 5-methyl-2'-deoxycytidine in DNA + S-adenosyl-L-homocysteine + H(+). Activated by binding to the regulatory factor DNMT3L. Required for genome-wide de novo methylation and is essential for the establishment of DNA methylation patterns during development. DNA methylation is coordinated with methylation of histones. May preferentially methylates nucleosomal DNA within the nucleosome core region. May function as transcriptional co-repressor by associating with CBX4 and independently of DNA methylation. Seems to be involved in gene silencing. In association with DNMT1 and via the recruitment of CTCFL/BORIS, involved in activation of BAG1 gene expression by modulating dimethylation of promoter histone H3 at H3K4 and H3K9. Functions as a transcriptional corepressor by associating with ZHX1. Required for DUX4 silencing in somatic cells. This is DNA (cytosine-5)-methyltransferase 3B (Dnmt3b) from Mus musculus (Mouse).